Reading from the N-terminus, the 601-residue chain is Terpenoid synthase 17 (601 aa).

Mg(2+) contacts are provided by asparagine 354, aspartate 358, asparagine 497, threonine 501, and glutamate 505. A DDXXD motif; degenerate motif is present at residues 354 to 358 (NDTCD).

It belongs to the terpene synthase family. Tpsa subfamily. It depends on Mg(2+) as a cofactor. The cofactor is Mn(2+). Expressed exclusively in flowers.

It is found in the cytoplasm. It participates in secondary metabolite biosynthesis; terpenoid biosynthesis. This Arabidopsis thaliana (Mouse-ear cress) protein is Terpenoid synthase 17 (TPS17).